A 273-amino-acid polypeptide reads, in one-letter code: Acetyl-coenzyme A carboxylase carboxyl transferase subunit alpha (273 aa).

The CoA carboxyltransferase C-terminal domain occupies 1 to 244; the sequence is MKKATQSKAW…KVVLKQALDE (244 aa).

Belongs to the AccA family. As to quaternary structure, acetyl-CoA carboxylase is a heterohexamer composed of biotin carboxyl carrier protein (AccB), biotin carboxylase (AccC) and two subunits each of ACCase subunit alpha (AccA) and ACCase subunit beta (AccD).

It is found in the cytoplasm. It catalyses the reaction N(6)-carboxybiotinyl-L-lysyl-[protein] + acetyl-CoA = N(6)-biotinyl-L-lysyl-[protein] + malonyl-CoA. It participates in lipid metabolism; malonyl-CoA biosynthesis; malonyl-CoA from acetyl-CoA: step 1/1. Component of the acetyl coenzyme A carboxylase (ACC) complex. First, biotin carboxylase catalyzes the carboxylation of biotin on its carrier protein (BCCP) and then the CO(2) group is transferred by the carboxyltransferase to acetyl-CoA to form malonyl-CoA. The protein is Acetyl-coenzyme A carboxylase carboxyl transferase subunit alpha of Acinetobacter baumannii (strain ACICU).